The sequence spans 76 residues: Conotoxin Vc6.6 (76 aa).

The first 22 residues, 1 to 22, serve as a signal peptide directing secretion; the sequence is MKLTCMVIVAVLFLTANTFVTA. A propeptide spanning residues 23-52 is cleaved from the precursor; that stretch reads VPHSSNALENLYLKAHHEMNNPKDSELNKR. 3 disulfides stabilise this stretch: cysteine 53–cysteine 67, cysteine 60–cysteine 71, and cysteine 66–cysteine 75.

It belongs to the conotoxin O1 superfamily. As to expression, expressed by the venom duct.

It localises to the secreted. In Conus victoriae (Queen Victoria cone), this protein is Conotoxin Vc6.6.